The sequence spans 315 residues: Ribosomal RNA small subunit methyltransferase H (315 aa).

S-adenosyl-L-methionine contacts are provided by residues 35–37 (AGH), Asp-55, Phe-84, Asp-105, and Gln-112.

Belongs to the methyltransferase superfamily. RsmH family.

It is found in the cytoplasm. It carries out the reaction cytidine(1402) in 16S rRNA + S-adenosyl-L-methionine = N(4)-methylcytidine(1402) in 16S rRNA + S-adenosyl-L-homocysteine + H(+). In terms of biological role, specifically methylates the N4 position of cytidine in position 1402 (C1402) of 16S rRNA. This Streptococcus agalactiae serotype Ia (strain ATCC 27591 / A909 / CDC SS700) protein is Ribosomal RNA small subunit methyltransferase H.